The sequence spans 667 residues: Protein OS-9 (667 aa).

Residues 1–25 form the signal peptide; sequence MAAETLLSSLLGLLLLGLLLPASLT. Residues 108–230 enclose the MRH domain; sequence APCLLKTKDW…TIRTPRLCPH (123 aa). A disulfide bond links C110 and C123. The a mannooligosaccharide derivative site is built by W117, W118, and Q130. N177 is a glycosylation site (N-linked (GlcNAc...) asparagine). Disulfide bonds link C181-C216 and C196-C228. The a mannooligosaccharide derivative site is built by D182, R188, E212, and Y218. Disordered stretches follow at residues 284-355, 372-452, 464-483, 504-540, and 633-667; these read WSET…NNVQ, LKGG…RDRL, LENI…LKKE, LEEK…PEHR, and AQKE…EFDF. Basic and acidic residues-rich tracts occupy residues 302-311 and 396-412; these read TKDDSKDSDF and PQRE…RQRE. Acidic residues predominate over residues 413-429; that stretch reads MEEEEDEDEDEDEDEDE. Over residues 430–452 the composition is skewed to basic and acidic residues; that stretch reads RQLLGEFEKELEGILLPSDRDRL. Residues 504 to 513 show a composition bias toward basic and acidic residues; that stretch reads LEEKQSPELV. Residues 514–523 are compositionally biased toward basic residues; sequence KKHKKKRVVP. A compositionally biased stretch (basic and acidic residues) spans 633–647; that stretch reads AQKERQRQKELESNY.

Belongs to the OS-9 family. Component of the HRD1 complex, which comprises at least SYNV1/HRD1, DERL1/2, FAM8A1, HERPUD1/HERP, OS9, SEL1L and UBE2J1. FAM8A1 is stabilized by interaction with SYNV1, which prevents its proteasomal degradation. OS9 and UBE2J1 recruitment to the complex may be mediated by SEL1L. Through this complex, may interact with ERLEC1 and HSPA5. Interacts (via C-terminus) with CPNE6 (via second C2 domain); this interaction occurs in a calcium-dependent manner in vitro. Interacts with CREB3. In terms of processing, intramolecular disulfide bonds. Isoform 1 and isoform 2 are N-glycosylated. As to expression, ubiquitously expressed. Found as well in all tumor cell lines analyzed, amplified in sarcomas. Highly expressed in osteosarcoma SJSA-1 and rhabdomyosarcoma Rh30 cell lines. In terms of tissue distribution, isoform 2 is the major isoform detected in all cell types examined.

The protein localises to the endoplasmic reticulum lumen. Lectin component of the HRD1 complex, which functions in endoplasmic reticulum (ER) quality control and ER-associated degradation (ERAD). Specifically recognizes and binds improperly folded glycoproteins as well as hyperglycosylated proteins, retain them in the ER, and transfers them to the ubiquitination machinery and promote their degradation. Possible targets include TRPV4 as well as hyperglycosylated HSP90B1. The protein is Protein OS-9 (OS9) of Homo sapiens (Human).